The primary structure comprises 2345 residues: Acetyl-CoA carboxylase 1 (2345 aa).

Position 1 is an N-acetylmethionine (methionine 1). 8 positions are modified to phosphoserine: serine 5, serine 23, serine 25, serine 29, serine 34, serine 47, serine 49, and serine 52. Threonine 57 is modified (phosphothreonine). Serine 77 carries the phosphoserine modification. At serine 79 the chain carries Phosphoserine; by AMPK. The 502-residue stretch at 116 to 617 folds into the Biotin carboxylation domain; the sequence is VIEKVLIANN…DTGWLDRLIA (502 aa). Residues 274–465 enclose the ATP-grasp domain; the sequence is SKRILNVPQD…LPAAQLQIAM (192 aa). 314–319 is a binding site for ATP; that stretch reads GGGGKG. Mg(2+) is bound by residues glutamate 423, glutamate 436, and asparagine 438. 3 residues coordinate Mn(2+): glutamate 423, glutamate 436, and asparagine 438. Arginine 440 is a catalytic residue. Residue threonine 609 is modified to Phosphothreonine. The Biotinyl-binding domain maps to 744–818; the sequence is FEKENDPSVM…DPGCVIAKMQ (75 aa). Lysine 785 carries the post-translational modification N6-biotinyllysine. Serine 834 is modified (phosphoserine). A phosphoserine; by AMPK; in vitro mark is found at serine 1200 and serine 1215. Phosphoserine is present on serine 1217. Threonine 1226 is modified (phosphothreonine). Serine 1258, serine 1262, and serine 1272 each carry phosphoserine. N6-acetyllysine is present on lysine 1333. The 339-residue stretch at 1575–1913 folds into the CoA carboxyltransferase N-terminal domain; that stretch reads PYVTKDLLQS…NVHSSVPLLN (339 aa). The carboxyltransferase stretch occupies residues 1575-2233; that stretch reads PYVTKDLLQS…EDLVKKKIHS (659 aa). Residues arginine 1822, lysine 2126, and arginine 2128 each contribute to the CoA site. Residues 1917-2233 enclose the CoA carboxyltransferase C-terminal domain; that stretch reads PIDRIIEFVP…EDLVKKKIHS (317 aa). Threonine 2152 bears the Phosphothreonine mark.

Monomer, homodimer, and homotetramer. Can form filamentous polymers. Interacts in its inactive phosphorylated form with the BRCT domains of BRCA1 which prevents ACACA dephosphorylation and inhibits lipid synthesis. Interacts with MID1IP1; interaction with MID1IP1 promotes oligomerization and increases its activity. Mg(2+) is required as a cofactor. The cofactor is Mn(2+). Biotin serves as cofactor. The N-terminus is blocked. In terms of processing, phosphorylation on Ser-1262 is required for interaction with BRCA1. Post-translationally, phosphorylation at Ser-79 by AMPK inactivates enzyme activity. Phosphorylated in vitro at Ser-1200 and Ser-1215 by AMPK; the relevance of phosphorylation of these sites in vivo is however unclear. The biotin cofactor is covalently attached to the central biotinyl-binding domain and is required for the catalytic activity.

It localises to the cytoplasm. Its subcellular location is the cytosol. It catalyses the reaction hydrogencarbonate + acetyl-CoA + ATP = malonyl-CoA + ADP + phosphate + H(+). It functions in the pathway lipid metabolism; malonyl-CoA biosynthesis; malonyl-CoA from acetyl-CoA: step 1/1. Its activity is regulated as follows. Inhibited by phosphorylation. Citrate promotes oligomerization of the protein into filaments that correspond to the most active form of the carboxylase. In terms of biological role, cytosolic enzyme that catalyzes the carboxylation of acetyl-CoA to malonyl-CoA, the first and rate-limiting step of de novo fatty acid biosynthesis. This is a 2 steps reaction starting with the ATP-dependent carboxylation of the biotin carried by the biotin carboxyl carrier (BCC) domain followed by the transfer of the carboxyl group from carboxylated biotin to acetyl-CoA. The chain is Acetyl-CoA carboxylase 1 from Rattus norvegicus (Rat).